Here is a 130-residue protein sequence, read N- to C-terminus: Iron-sulfur cluster insertion protein ErpA 2 (130 aa).

Cys58, Cys122, and Cys124 together coordinate iron-sulfur cluster.

This sequence belongs to the HesB/IscA family. Homodimer. Requires iron-sulfur cluster as cofactor.

Its function is as follows. Required for insertion of 4Fe-4S clusters for at least IspG. In Methylococcus capsulatus (strain ATCC 33009 / NCIMB 11132 / Bath), this protein is Iron-sulfur cluster insertion protein ErpA 2.